A 161-amino-acid chain; its full sequence is Large ribosomal subunit protein uL15 (161 aa).

Residues 1-57 are disordered; it reads MRLKDAIPKKGSQQRGRRVGRGISAGQGASCGKGMRGQKSRSGGSTRPGFEGGQNPL. A compositionally biased stretch (gly residues) spans 23-35; that stretch reads ISAGQGASCGKGM.

This sequence belongs to the universal ribosomal protein uL15 family. In terms of assembly, part of the 50S ribosomal subunit.

Binds to the 23S rRNA. This Trichodesmium erythraeum (strain IMS101) protein is Large ribosomal subunit protein uL15.